Here is a 200-residue protein sequence, read N- to C-terminus: Probable GTP-binding protein EngB (200 aa).

An EngB-type G domain is found at T22–A194. GTP-binding positions include G30 to S37, G57 to L61, D75 to G78, T142 to D145, and F173 to A175. The Mg(2+) site is built by S37 and T59.

This sequence belongs to the TRAFAC class TrmE-Era-EngA-EngB-Septin-like GTPase superfamily. EngB GTPase family. The cofactor is Mg(2+).

Necessary for normal cell division and for the maintenance of normal septation. This chain is Probable GTP-binding protein EngB, found in Pelobacter propionicus (strain DSM 2379 / NBRC 103807 / OttBd1).